A 93-amino-acid chain; its full sequence is UPF0358 protein LMHCC_1561 (93 aa).

This sequence belongs to the UPF0358 family.

The protein is UPF0358 protein LMHCC_1561 of Listeria monocytogenes serotype 4a (strain HCC23).